Consider the following 711-residue polypeptide: MATSSMSKGCFVFKPNSKKRKISLPIEDYFNKGKNEPEDSKLRFETYQLIWQQMKSENERLQEELNKNLFDNLIEFLQKSHSGFQKNSRDLGGQIKLREIPTAALVLGVNVTDHDLTFGSLTEALQNNVTPYVVSLQAKDCPDMKHFLQKLISQLMDCCVDIKSKEEESVHVTQRKTHYSMDSLSSWYMTVTQKTDPKMLSKKRTTSSQWQSPPVVVILKDMESFATKVLQDFIIISSQHLHEFPLILIFGIATSPIIIHRLLPHAVSSLLCIELFQSLSCKEHLTTVLDKLLLTTQFPFKINEKVLQVLTNIFLYHDFSVQNFIKGLQLSLLEHFYSQPLSVLCCNLPEAKRRINFLSNNQCENIRRLPSFRRYVEKQASEKQVALLTNERYLKEETQLLLENLHVYHMNYFLVLRCLHKFTSSLPKYPLGRQIRELYCTCLEKNIWDSEEYASVLQLLRMLAKDELMTILEKCFKVFKSYCENHLGSTAKRIEEFLAQFQSLDETKEEEDASGSQPKGLQKTDLYHLQKSLLEMKELRRSKKQTKFEVLRENVVNFIDCLVREYLLPPETQPLHEVVYFSAAHALREHLNAAPRIALHTALNNPYYYLKNEALKSEEGCIPNIAPDICIAYKLHLECSRLINLVDWSEAFATVVTAAEKMDANSATSEEMNEIIHARFIRAVSELELLGFIKPTKQKTDHVARLTWGGC.

Ser23 and Ser516 each carry phosphoserine.

It belongs to the ORC3 family. As to quaternary structure, component of ORC, a complex composed of at least 6 subunits: ORC1, ORC2, ORC3, ORC4, ORC5 and ORC6. ORC is regulated in a cell-cycle dependent manner. It is sequentially assembled at the exit from anaphase of mitosis and disassembled as cells enter S phase. Multi-mono-ubiquitinated by OBI1; ubiquitination is important for efficient DNA replication origin site activation. Ubiquitination levels are low in mitotic and early G1-phAse cells and are induced in late G1-/early S-phase, peaking in S-phase and decrease toward the end of the cell cycle.

It is found in the nucleus. The protein resides in the chromosome. Functionally, component of the origin recognition complex (ORC) that binds origins of replication. DNA-binding is ATP-dependent. The specific DNA sequences that define origins of replication have not been identified yet. ORC is required to assemble the pre-replication complex necessary to initiate DNA replication. Binds histone H3 and H4 trimethylation marks H3K9me3, H3K27me3 and H4K20me3. This Homo sapiens (Human) protein is Origin recognition complex subunit 3 (ORC3).